We begin with the raw amino-acid sequence, 89 residues long: Small ribosomal subunit protein bS20 (89 aa).

The segment at methionine 1 to serine 26 is disordered. A compositionally biased stretch (basic residues) spans lysine 16 to serine 26.

It belongs to the bacterial ribosomal protein bS20 family.

Binds directly to 16S ribosomal RNA. This is Small ribosomal subunit protein bS20 from Buchnera aphidicola subsp. Acyrthosiphon pisum (strain 5A).